The chain runs to 164 residues: ATP synthase subunit b (164 aa).

The helical transmembrane segment at 4 to 24 (IHFDLTLVVQVLSFLLLVYIL) threads the bilayer.

It belongs to the ATPase B chain family. F-type ATPases have 2 components, F(1) - the catalytic core - and F(0) - the membrane proton channel. F(1) has five subunits: alpha(3), beta(3), gamma(1), delta(1), epsilon(1). F(0) has three main subunits: a(1), b(2) and c(10-14). The alpha and beta chains form an alternating ring which encloses part of the gamma chain. F(1) is attached to F(0) by a central stalk formed by the gamma and epsilon chains, while a peripheral stalk is formed by the delta and b chains.

The protein resides in the cell membrane. In terms of biological role, f(1)F(0) ATP synthase produces ATP from ADP in the presence of a proton or sodium gradient. F-type ATPases consist of two structural domains, F(1) containing the extramembraneous catalytic core and F(0) containing the membrane proton channel, linked together by a central stalk and a peripheral stalk. During catalysis, ATP synthesis in the catalytic domain of F(1) is coupled via a rotary mechanism of the central stalk subunits to proton translocation. Component of the F(0) channel, it forms part of the peripheral stalk, linking F(1) to F(0). This is ATP synthase subunit b from Desulfitobacterium hafniense (strain Y51).